A 340-amino-acid chain; its full sequence is MDTWTVLLILQASLVLPGAVGTRTNTRTAPTPILRFVAVGDWGGVPNAPFHTAREMANAKAIATTVKTLGADFILSLGDNFYFTGVHDAKDKRFQETFEDVFSDPSLRNVPWHVLAGNHDHLGNVSAQIAYSKISKRWNFPSPYYRLRFKIPRSNVSVAIFMLDTVTLCGNSDDFVSQQPERPRNLALARTQLAWIKKQLAAAKEDYVLVAGHYPVWSIAEHGPTHCLVKQLLPLLTTHKVTAYLCGHDHNLQYLQDENGLGFVLSGAGNFMDPSKKHLRKVPNGYLRFHFGAENSLGGFAYVEITPKEMSVTYIEASGKSLFKTKLPRRARSEHQHRRA.

The N-terminal stretch at 1–20 (MDTWTVLLILQASLVLPGAV) is a signal peptide. Residues D41, D79, Y82, and N118 each coordinate Fe cation. N-linked (GlcNAc...) asparagine glycans are attached at residues N124 and N155. C169 and C227 form a disulfide bridge. Fe cation-binding residues include H213, H248, and H250.

It depends on Fe cation as a cofactor.

Its subcellular location is the secreted. The catalysed reaction is a phosphate monoester + H2O = an alcohol + phosphate. In terms of biological role, uteroferrin is a phosphoprotein phosphatase, synthesized in response to progesterone. It appears to function in transplacental transport of iron in pig. This chain is Tartrate-resistant acid phosphatase type 5 (ACP5), found in Sus scrofa (Pig).